The chain runs to 405 residues: Multidrug resistance protein MdtH (405 aa).

12 consecutive transmembrane segments (helical) span residues 13–33 (YFLL…FPLI), 34–54 (SIRF…ALGL), 78–95 (MIIA…LMGI), 99–116 (PWLL…GTLF), 139–159 (LLMM…SWLL), 165–185 (LVCL…AWLL), 213–233 (YVLT…MLPI), 243–263 (AAVK…LYPI), 277–297 (LMAG…IEDL), 299–319 (ALFM…PARE), 340–360 (LGLA…YDVG), and 365–385 (IPQL…LGLY).

It belongs to the major facilitator superfamily. DHA1 family. MdtH (TC 2.A.1.2.21) subfamily.

It localises to the cell inner membrane. The sequence is that of Multidrug resistance protein MdtH from Sodalis glossinidius (strain morsitans).